Reading from the N-terminus, the 582-residue chain is Protein NUCLEAR FUSION DEFECTIVE 4 (582 aa).

Positions 1-20 (MRPRIRDVSDKLRPNRASFD) are disordered. Helical transmembrane passes span 46-66 (VLVAAIWIQASTGTNFDFSAY), 100-120 (IALGYFPLSVVLFAAAAMGFV), 132-152 (IITLPYSLVFLCCLLAGLSIC), 172-192 (LALSLTVSFNGISAALYSLAF), 202-222 (LYLLLNSLVPLVVSFAALYPV), 243-263 (VFTILNVLAVITSFHLLLSSS), 270-290 (LNFIGAVVLLVFPLCAPLLVY), and 358-378 (LEFWLYYIAYFCGGTIGLVYS). Residue Asn-391 is glycosylated (N-linked (GlcNAc...) asparagine). Transmembrane regions (helical) follow at residues 395 to 412 (LVTIYSSFSFFGRLLSAA), 425 to 445 (TGWFAIALLPTPIAFFLLAVS), 458 to 478 (LIGLSSGFIFAAAVSITSDLF), 489 to 509 (ILITNIPIGSLLYGYIAASIY), and 536 to 556 (TFVFWGCLSILGVVSSLSLYI).

It is found in the membrane. Functionally, required for karyogamy during female gametophyte development, when the two polar nuclei fuse to form the diploid central cell nucleus. In Arabidopsis thaliana (Mouse-ear cress), this protein is Protein NUCLEAR FUSION DEFECTIVE 4.